A 103-amino-acid polypeptide reads, in one-letter code: Small ribosomal subunit protein uS10 (103 aa).

This sequence belongs to the universal ribosomal protein uS10 family. As to quaternary structure, part of the 30S ribosomal subunit.

In terms of biological role, involved in the binding of tRNA to the ribosomes. The sequence is that of Small ribosomal subunit protein uS10 from Chromobacterium violaceum (strain ATCC 12472 / DSM 30191 / JCM 1249 / CCUG 213 / NBRC 12614 / NCIMB 9131 / NCTC 9757 / MK).